Here is a 368-residue protein sequence, read N- to C-terminus: Anti-sigma-X factor RsiX (368 aa).

The span at 73–87 (QPQQKEASQENAVTK) shows a compositional bias: polar residues. The segment at 73–101 (QPQQKEASQENAVTKTETEDSPKAASSLD) is disordered.

It is found in the cell membrane. Functionally, the anti-sigma factor for extracytoplasmic function (ECF) sigma factor SigX, inhibits SigX activity and stabilizes it. The polypeptide is Anti-sigma-X factor RsiX (rsiX) (Bacillus subtilis (strain 168)).